The sequence spans 230 residues: Large ribosomal subunit protein uL1 (230 aa).

This sequence belongs to the universal ribosomal protein uL1 family. In terms of assembly, part of the 50S ribosomal subunit.

Binds directly to 23S rRNA. The L1 stalk is quite mobile in the ribosome, and is involved in E site tRNA release. Its function is as follows. Protein L1 is also a translational repressor protein, it controls the translation of the L11 operon by binding to its mRNA. This Desulforapulum autotrophicum (strain ATCC 43914 / DSM 3382 / VKM B-1955 / HRM2) (Desulfobacterium autotrophicum) protein is Large ribosomal subunit protein uL1.